The following is a 340-amino-acid chain: Porphobilinogen deaminase (340 aa).

An S-(dipyrrolylmethanemethyl)cysteine modification is found at C258.

It belongs to the HMBS family. Dipyrromethane serves as cofactor.

The enzyme catalyses 4 porphobilinogen + H2O = hydroxymethylbilane + 4 NH4(+). It functions in the pathway porphyrin-containing compound metabolism; protoporphyrin-IX biosynthesis; coproporphyrinogen-III from 5-aminolevulinate: step 2/4. Functionally, tetrapolymerization of the monopyrrole PBG into the hydroxymethylbilane pre-uroporphyrinogen in several discrete steps. The polypeptide is Porphobilinogen deaminase (HEM3) (Candida albicans (strain SC5314 / ATCC MYA-2876) (Yeast)).